The primary structure comprises 355 residues: UDP-3-O-acylglucosamine N-acyltransferase (355 aa).

His-252 (proton acceptor) is an active-site residue.

Belongs to the transferase hexapeptide repeat family. LpxD subfamily. In terms of assembly, homotrimer.

It catalyses the reaction a UDP-3-O-[(3R)-3-hydroxyacyl]-alpha-D-glucosamine + a (3R)-hydroxyacyl-[ACP] = a UDP-2-N,3-O-bis[(3R)-3-hydroxyacyl]-alpha-D-glucosamine + holo-[ACP] + H(+). It functions in the pathway bacterial outer membrane biogenesis; LPS lipid A biosynthesis. Its function is as follows. Catalyzes the N-acylation of UDP-3-O-acylglucosamine using 3-hydroxyacyl-ACP as the acyl donor. Is involved in the biosynthesis of lipid A, a phosphorylated glycolipid that anchors the lipopolysaccharide to the outer membrane of the cell. This is UDP-3-O-acylglucosamine N-acyltransferase from Polynucleobacter necessarius subsp. necessarius (strain STIR1).